Consider the following 865-residue polypeptide: Leucine--tRNA ligase (865 aa).

A 'HIGH' region motif is present at residues 36-46 (PYPSGKIHMGH). Positions 608 to 612 (KMSKS) match the 'KMSKS' region motif. Residue Lys611 coordinates ATP.

This sequence belongs to the class-I aminoacyl-tRNA synthetase family.

Its subcellular location is the cytoplasm. The enzyme catalyses tRNA(Leu) + L-leucine + ATP = L-leucyl-tRNA(Leu) + AMP + diphosphate. In Wolbachia sp. subsp. Brugia malayi (strain TRS), this protein is Leucine--tRNA ligase.